We begin with the raw amino-acid sequence, 194 residues long: Peptidyl-tRNA hydrolase (194 aa).

TRNA is bound at residue Y16. H21 acts as the Proton acceptor in catalysis. Positions 67, 69, and 115 each coordinate tRNA.

Belongs to the PTH family. Monomer.

It is found in the cytoplasm. It catalyses the reaction an N-acyl-L-alpha-aminoacyl-tRNA + H2O = an N-acyl-L-amino acid + a tRNA + H(+). Hydrolyzes ribosome-free peptidyl-tRNAs (with 1 or more amino acids incorporated), which drop off the ribosome during protein synthesis, or as a result of ribosome stalling. Functionally, catalyzes the release of premature peptidyl moieties from peptidyl-tRNA molecules trapped in stalled 50S ribosomal subunits, and thus maintains levels of free tRNAs and 50S ribosomes. The polypeptide is Peptidyl-tRNA hydrolase (Shigella flexneri).